Consider the following 205-residue polypeptide: Large ribosomal subunit protein uL18 (205 aa).

It belongs to the universal ribosomal protein uL18 family. In terms of assembly, part of the 50S ribosomal subunit. Contacts the 5S and 23S rRNAs.

Its function is as follows. This is one of the proteins that bind and probably mediate the attachment of the 5S RNA into the large ribosomal subunit, where it forms part of the central protuberance. The sequence is that of Large ribosomal subunit protein uL18 from Pyrobaculum arsenaticum (strain DSM 13514 / JCM 11321 / PZ6).